A 197-amino-acid polypeptide reads, in one-letter code: MDDFDPTVTNSPKFRLIAVQCLFSITAFAAMLSQRHGLAGPDEMTLEECGPQACGYQKFSNFKFLIAVCIIYAVFSLVVMAAYLLQRVPPPVTELTAYTVMNVLLFAAFAMSATSCNITIVDPVYPVCKRATSAKASIAFAFFTWLAVCFSMLFTYKEWRDVDYHVPGSGAYEFVPGVTSGSSRSSYPPQASSSSYA.

Residues 1-13 (MDDFDPTVTNSPK) are Cytoplasmic-facing. A helical transmembrane segment spans residues 14 to 34 (FRLIAVQCLFSITAFAAMLSQ). Over 35–63 (RHGLAGPDEMTLEECGPQACGYQKFSNFK) the chain is Extracellular. Residues 64 to 84 (FLIAVCIIYAVFSLVVMAAYL) traverse the membrane as a helical segment. The Cytoplasmic portion of the chain corresponds to 85–99 (LQRVPPPVTELTAYT). A helical membrane pass occupies residues 100–120 (VMNVLLFAAFAMSATSCNITI). Over 121 to 135 (VDPVYPVCKRATSAK) the chain is Extracellular. Residues 136–156 (ASIAFAFFTWLAVCFSMLFTY) traverse the membrane as a helical segment. Topologically, residues 157–197 (KEWRDVDYHVPGSGAYEFVPGVTSGSSRSSYPPQASSSSYA) are cytoplasmic. Residues 178 to 197 (VTSGSSRSSYPPQASSSSYA) form a disordered region. Residues 180–197 (SGSSRSSYPPQASSSSYA) are compositionally biased toward low complexity.

It belongs to the Casparian strip membrane proteins (CASP) family. In terms of assembly, homodimer and heterodimers.

It localises to the cell membrane. This Micromonas commoda (strain RCC299 / NOUM17 / CCMP2709) (Picoplanktonic green alga) protein is CASP-like protein 0U1.